A 559-amino-acid chain; its full sequence is 2-isopropylmalate synthase (559 aa).

In terms of domain architecture, Pyruvate carboxyltransferase spans 33-307 (PIWCSSDLRD…NPELDFSDID (275 aa)). The Mg(2+) site is built by D42, H246, H248, and N282. Positions 439 to 559 (ANTPYALVSH…SLSEQQAKAA (121 aa)) are regulatory domain.

It belongs to the alpha-IPM synthase/homocitrate synthase family. LeuA type 2 subfamily. Homodimer. Mg(2+) is required as a cofactor.

Its subcellular location is the cytoplasm. It catalyses the reaction 3-methyl-2-oxobutanoate + acetyl-CoA + H2O = (2S)-2-isopropylmalate + CoA + H(+). The protein operates within amino-acid biosynthesis; L-leucine biosynthesis; L-leucine from 3-methyl-2-oxobutanoate: step 1/4. Catalyzes the condensation of the acetyl group of acetyl-CoA with 3-methyl-2-oxobutanoate (2-ketoisovalerate) to form 3-carboxy-3-hydroxy-4-methylpentanoate (2-isopropylmalate). The protein is 2-isopropylmalate synthase of Pseudomonas fluorescens (strain ATCC BAA-477 / NRRL B-23932 / Pf-5).